We begin with the raw amino-acid sequence, 472 residues long: Uronate isomerase (472 aa).

The protein belongs to the metallo-dependent hydrolases superfamily. Uronate isomerase family.

It carries out the reaction D-glucuronate = D-fructuronate. The catalysed reaction is aldehydo-D-galacturonate = keto-D-tagaturonate. It functions in the pathway carbohydrate metabolism; pentose and glucuronate interconversion. The protein is Uronate isomerase of Xanthomonas axonopodis pv. citri (strain 306).